A 164-amino-acid chain; its full sequence is ATP synthase B' chain, cyanelle (164 aa).

The chain crosses the membrane as a helical span at residues 26-46 (ATLPVMMVQLLVLMLILNAVF).

Belongs to the ATPase B chain family. In terms of assembly, F-type ATPases have 2 components, F(1) - the catalytic core - and F(0) - the membrane proton channel. F(1) has five subunits: alpha(3), beta(3), gamma(1), delta(1), epsilon(1). F(0) has four main subunits: a(1), b(1), b'(1) and c(10-14). The alpha and beta chains form an alternating ring which encloses part of the gamma chain. F(1) is attached to F(0) by a central stalk formed by the gamma and epsilon chains, while a peripheral stalk is formed by the delta, b and b' chains.

Its subcellular location is the plastid. It is found in the cyanelle thylakoid membrane. Functionally, f(1)F(0) ATP synthase produces ATP from ADP in the presence of a proton or sodium gradient. F-type ATPases consist of two structural domains, F(1) containing the extramembraneous catalytic core and F(0) containing the membrane proton channel, linked together by a central stalk and a peripheral stalk. During catalysis, ATP synthesis in the catalytic domain of F(1) is coupled via a rotary mechanism of the central stalk subunits to proton translocation. In terms of biological role, component of the F(0) channel, it forms part of the peripheral stalk, linking F(1) to F(0). The b'-subunit is a diverged and duplicated form of b found in plants and photosynthetic bacteria. The polypeptide is ATP synthase B' chain, cyanelle (Cyanophora paradoxa).